The chain runs to 547 residues: Chaperonin GroEL (547 aa).

ATP-binding positions include 30-33 (TLGP), lysine 51, 87-91 (DGTTT), glycine 415, and aspartate 496.

This sequence belongs to the chaperonin (HSP60) family. In terms of assembly, forms a cylinder of 14 subunits composed of two heptameric rings stacked back-to-back. Interacts with the co-chaperonin GroES.

The protein localises to the cytoplasm. It carries out the reaction ATP + H2O + a folded polypeptide = ADP + phosphate + an unfolded polypeptide.. In terms of biological role, together with its co-chaperonin GroES, plays an essential role in assisting protein folding. The GroEL-GroES system forms a nano-cage that allows encapsulation of the non-native substrate proteins and provides a physical environment optimized to promote and accelerate protein folding. The chain is Chaperonin GroEL from Mannheimia succiniciproducens (strain KCTC 0769BP / MBEL55E).